The chain runs to 345 residues: Arginase (345 aa).

Residues 1 to 16 (MKETAAAKFERQHMDS) show a composition bias toward basic and acidic residues. Residues 1–34 (MKETAAAKFERQHMDSPDLGTDDDDKMSPATSPF) are disordered. 6 residues coordinate Mn(2+): I101, H124, S126, G128, I232, and C234.

This sequence belongs to the arginase family. In terms of assembly, homotrimer. Requires Mn(2+) as cofactor.

It carries out the reaction L-arginine + H2O = urea + L-ornithine. The protein operates within nitrogen metabolism; urea cycle; L-ornithine and urea from L-arginine: step 1/1. The enzyme activity is increased in the range of 20-50% upon the addition of Mn(2+) (1 mM), Co(2+) (1 mM), Ni(2+) (1 and 5 mM) and K(+) (5 mM). In contrast, the addition of Cu(2+), Zn(2+), Ca(2+), Mg(2+), Fe(2+) (both 1 and 5 mM), and Co(2+) (5 mM) strongly suppresses the arginase activity. SDS (1%) and EDTA (1 mM) are the most potent inhibitors. Reducing agents DTT (1 mM), PMSF (1 mM) and beta-mercaptoethanol (1 mM) also significantly inhibit activity by 85%, 64% and 35%, respectively. Surfactants Triton X-100 (1%), Tween-80 (1%) and Tween-20 (1%) are more tolerant, showing a slight decrease of arginase activity in the range of 10-30%. Its function is as follows. Cold-active L-arginase that catalyzes the hydrolysis of L-arginine to L-ornithine and urea, an essential reaction in the urea cycle for toxic ammonia removal and cell proliferation. Is not able to use D-arginine or L-canavanine as substrates. In Glaciozyma antarctica (strain PI12) (Antarctic psychrophilic yeast), this protein is Arginase.